A 402-amino-acid polypeptide reads, in one-letter code: tRNA(Met) cytidine acetate ligase (402 aa).

Residues 7 to 20, Gly102, Asn171, and Arg196 each bind ATP; that span reads ITEY…HELH.

It belongs to the TmcAL family.

It localises to the cytoplasm. It carries out the reaction cytidine(34) in elongator tRNA(Met) + acetate + ATP = N(4)-acetylcytidine(34) in elongator tRNA(Met) + AMP + diphosphate. Catalyzes the formation of N(4)-acetylcytidine (ac(4)C) at the wobble position of elongator tRNA(Met), using acetate and ATP as substrates. First activates an acetate ion to form acetyladenylate (Ac-AMP) and then transfers the acetyl group to tRNA to form ac(4)C34. This is tRNA(Met) cytidine acetate ligase from Clostridium perfringens (strain ATCC 13124 / DSM 756 / JCM 1290 / NCIMB 6125 / NCTC 8237 / Type A).